The primary structure comprises 510 residues: GMP synthase [glutamine-hydrolyzing] (510 aa).

One can recognise a Glutamine amidotransferase type-1 domain in the interval 5-195 (PILVVNFGSQ…IYGVCKAEKN (191 aa)). C82 (nucleophile) is an active-site residue. Active-site residues include H169 and E171. Residues 196-385 (WEMGDFIHEK…LGVPEEILRR (190 aa)) form the GMPS ATP-PPase domain. Residue 223-229 (SGGVDST) participates in ATP binding.

In terms of assembly, homodimer.

The enzyme catalyses XMP + L-glutamine + ATP + H2O = GMP + L-glutamate + AMP + diphosphate + 2 H(+). Its pathway is purine metabolism; GMP biosynthesis; GMP from XMP (L-Gln route): step 1/1. Functionally, catalyzes the synthesis of GMP from XMP. This is GMP synthase [glutamine-hydrolyzing] (guaA) from Aquifex aeolicus (strain VF5).